The primary structure comprises 206 residues: Small ribosomal subunit protein uS4 (206 aa).

Positions 94 to 156 (RRLDNVVYRL…SRRRMYFKNL (63 aa)) constitute an S4 RNA-binding domain.

It belongs to the universal ribosomal protein uS4 family. As to quaternary structure, part of the 30S ribosomal subunit. Contacts protein S5. The interaction surface between S4 and S5 is involved in control of translational fidelity.

In terms of biological role, one of the primary rRNA binding proteins, it binds directly to 16S rRNA where it nucleates assembly of the body of the 30S subunit. Functionally, with S5 and S12 plays an important role in translational accuracy. This chain is Small ribosomal subunit protein uS4, found in Roseiflexus castenholzii (strain DSM 13941 / HLO8).